Here is a 194-residue protein sequence, read N- to C-terminus: MESFEVSSIDLKVFGKWDTKVEIRDPSLKKYIGLMPVYLPHTGGRHEHRRFGKAKLPIVERLINNVMRPGRNKGKKMLAYNIVKTAFDIIALKTGQNPIQVLVKAIENSAPREEVTRIMYGGIVYYVAVDVAPQRRVDLALRHLVMGAKEASFNNPKPIEEALAEEIIAAASNDPKSFAIRKKEEIERIALSSR.

This sequence belongs to the universal ribosomal protein uS7 family. Part of the 30S ribosomal subunit.

Functionally, one of the primary rRNA binding proteins, it binds directly to 16S rRNA where it nucleates assembly of the head domain of the 30S subunit. Is located at the subunit interface close to the decoding center. This Sulfurisphaera tokodaii (strain DSM 16993 / JCM 10545 / NBRC 100140 / 7) (Sulfolobus tokodaii) protein is Small ribosomal subunit protein uS7.